Consider the following 460-residue polypeptide: MDLVTRRVRGADAIAGPLLFLEGVPRARLGELVRIRMAGGEERRGQIIELSGARVAVQVLEETRGLAPARAEVTLTGEVATLAVSRGMLGRVLDGLGRPTDGLPAPIAEARLPIHGAALNVTRREKPADFIETGVSAIDGLNTLVRGQKLPVFSCAGLPAGRLAGQIVCQARVRGGERFAVVFAAMGAPFREYDAYLEAFRRAGVLDRTAVFLNRAEDPPIERLMTPRCALTCAEHLAFSHGLHVLVVLTDMTSYCEALREVALARDEVPGRRGYPGYMYTDLATIYERAGRIAGRPGSITQVPVLTMPDDDLTHPIPDLSGYITEGQIVLSRELDRRGVYPPIDVLPSLSRLMGLGAGPGRTRADHRPLADQLYALYARGRDVRRMAAIVGSANLGEEERRLLEFGDRFERELVGQGDAFRSIEDTLETGWRLLAQLPPEALARIPAAVLEARRKEGQR.

Belongs to the ATPase alpha/beta chains family.

Functionally, produces ATP from ADP in the presence of a proton gradient across the membrane. The V-type beta chain is a regulatory subunit. This is V-type ATP synthase beta chain from Anaeromyxobacter sp. (strain Fw109-5).